A 369-amino-acid polypeptide reads, in one-letter code: Glycolate oxidase (369 aa).

Met-1 is modified (N-acetylmethionine). The 359-residue stretch at 1–359 (MEITNVNEYE…SRSHIAADWD (359 aa)) folds into the FMN hydroxy acid dehydrogenase domain. A glyoxylate-binding site is contributed by Tyr-24. Residues 77 to 79 (PTA), Ser-106, 127 to 129 (QLY), and Thr-155 each bind FMN. Tyr-129 is a binding site for glyoxylate. Arg-164 serves as a coordination point for glyoxylate. Residues Lys-230 and Ser-252 each coordinate FMN. Glyoxylate contacts are provided by His-254 and Arg-257. Residue His-254 is the Proton acceptor of the active site. FMN contacts are provided by residues 285–289 (DGGVR) and 308–309 (GR). Residues 367-369 (ARL) carry the Microbody targeting signal motif.

This sequence belongs to the FMN-dependent alpha-hydroxy acid dehydrogenase family. In terms of assembly, homotetramer. FMN is required as a cofactor.

It localises to the peroxisome. It carries out the reaction glycolate + O2 = glyoxylate + H2O2. The catalysed reaction is a (2S)-2-hydroxycarboxylate + O2 = a 2-oxocarboxylate + H2O2. It functions in the pathway photosynthesis; photorespiration; glycine from 2-phosphoglycolate: step 2/3. Functionally, catalyzes the oxidation of glycolate to glyoxylate, with a reduction of O2 to H2O2. Is a key enzyme in photorespiration in green plants. To a lesser extent, is also able to use L-lactate and 2-hydroxbyutanoate as substrate in vitro, but shows almost no activity with L-mandelate. This is Glycolate oxidase from Spinacia oleracea (Spinach).